The primary structure comprises 445 residues: COP9 signalosome complex subunit 3 (445 aa).

The 165-residue stretch at 217-381 folds into the PCI domain; that stretch reads RALYFFEVCI…GMVLFKDDPE (165 aa). Residues 426–445 are disordered; that stretch reads SQDDDLTSQHPKTFSGDPTD. Residues 433–445 are compositionally biased toward polar residues; sequence SQHPKTFSGDPTD.

It belongs to the CSN3 family. As to quaternary structure, component of the CSN complex, probably composed of CSN1b, alien/CSN2, CSN3, CSN4, CSN5, CSN6, CSN7 and CSN8.

The protein resides in the cytoplasm. It is found in the nucleus. In terms of biological role, component of the COP9 signalosome complex (CSN), a complex involved in various cellular and developmental processes. The CSN complex is an essential regulator of the ubiquitin (Ubl) conjugation pathway by mediating the deneddylation of the cullin subunits of the SCF-type E3 ligase complexes, leading to decrease the Ubl ligase activity of SCF. The CSN complex plays an essential role in oogenesis and embryogenesis and is required for proper photoreceptor R cell differentiation and promote lamina glial cell migration or axon targeting. It also promotes Ubl-dependent degradation of cyclin E (CycE) during early oogenesis. The protein is COP9 signalosome complex subunit 3 (CSN3) of Drosophila melanogaster (Fruit fly).